We begin with the raw amino-acid sequence, 261 residues long: Putative glyoxylase CFP32 (261 aa).

2 consecutive VOC domains span residues 11–129 and 143–257; these read TPNW…LWQA and TLIW…VLKP. Glyoxalase regions lie at residues 13–123 and 149–252; these read NWVD…TGAA and LLTD…GAIF.

The chain is Putative glyoxylase CFP32 from Mycobacterium bovis (strain ATCC BAA-935 / AF2122/97).